The chain runs to 433 residues: CinA-like protein (433 aa).

Belongs to the CinA family.

This chain is CinA-like protein, found in Prochlorococcus marinus subsp. pastoris (strain CCMP1986 / NIES-2087 / MED4).